A 440-amino-acid chain; its full sequence is C-terminal-binding protein 1 (440 aa).

NAD(+)-binding positions include S100, 180–185 (IGLGRV), D204, 237–243 (CGLNEHN), 264–266 (TAR), and D290. The active site involves R266. E295 is an active-site residue. The Proton donor role is filled by H315. 315 to 318 (HAAW) provides a ligand contact to NAD(+). Residues 409–440 (HAHPAVAHPPHAPSPGQTIKPEADRDHPSDQL) form a disordered region. Basic and acidic residues predominate over residues 429–440 (PEADRDHPSDQL).

Belongs to the D-isomer specific 2-hydroxyacid dehydrogenase family. It depends on NAD(+) as a cofactor.

It localises to the nucleus. Corepressor targeting diverse transcription regulators. Has dehydrogenase activity. The chain is C-terminal-binding protein 1 (ctbp1) from Xenopus laevis (African clawed frog).